A 539-amino-acid polypeptide reads, in one-letter code: Laccase-1 (539 aa).

The first 21 residues, 1 to 21 (MAFTAISLFLAALGVINTAFA), serve as a signal peptide directing secretion. Plastocyanin-like domains follow at residues 37-154 (AEVN…YDPE) and 166-309 (ESTV…HYLG). Asn-78 carries an N-linked (GlcNAc...) asparagine glycan. 2 residues coordinate Cu cation: His-88 and His-90. Disulfide bonds link Cys-109–Cys-513 and Cys-141–Cys-228. Residue Asn-120 is glycosylated (N-linked (GlcNAc...) asparagine). Cu cation contacts are provided by His-133 and His-135. Asn-202, Asn-233, Asn-240, Asn-293, Asn-318, Asn-353, Asn-385, and Asn-405 each carry an N-linked (GlcNAc...) asparagine glycan. One can recognise a Plastocyanin-like 3 domain in the interval 374–495 (SPTVPVLLQI…GFAVVMAEDP (122 aa)). Cu cation contacts are provided by His-421, His-424, and His-426. An N-linked (GlcNAc...) asparagine glycan is attached at Asn-457. Cu cation is bound by residues His-476, Cys-477, His-478, and His-482. Asn-532 is a glycosylation site (N-linked (GlcNAc...) asparagine).

Belongs to the multicopper oxidase family. The cofactor is Cu cation.

Its subcellular location is the secreted. It carries out the reaction 4 hydroquinone + O2 = 4 benzosemiquinone + 2 H2O. With respect to regulation, inhibited by chloride ions. Inhibited by citrate. Inhibited by oxalate. Activated by acetate. In vitro, has activity towards 2,2'-azino-bis(3-ethylbenzthiazoline-6-sulfonic acid) (ABTS), 2,6-dimethoxy-phenol, and guaiacol. Although brown rot fungi preferentially degrade hemicellulose and cellulose, the enzyme may contribute to generating small amounts of lignin breakdown products required for catalytic reactions. This chain is Laccase-1, found in Fomitopsis schrenkii (Brown rot fungus).